The sequence spans 489 residues: UDP-N-acetylmuramate--L-alanine ligase (489 aa).

Residue 130 to 136 (GTHGKTS) coordinates ATP.

This sequence belongs to the MurCDEF family.

The protein localises to the cytoplasm. It catalyses the reaction UDP-N-acetyl-alpha-D-muramate + L-alanine + ATP = UDP-N-acetyl-alpha-D-muramoyl-L-alanine + ADP + phosphate + H(+). The protein operates within cell wall biogenesis; peptidoglycan biosynthesis. Cell wall formation. This is UDP-N-acetylmuramate--L-alanine ligase from Corynebacterium efficiens (strain DSM 44549 / YS-314 / AJ 12310 / JCM 11189 / NBRC 100395).